A 498-amino-acid chain; its full sequence is Cytochrome P450 71D15 (498 aa).

A helical; Signal-anchor for type II membrane protein membrane pass occupies residues L3–I23. C437 serves as a coordination point for heme.

It belongs to the cytochrome P450 family. It depends on heme as a cofactor.

Its subcellular location is the endoplasmic reticulum membrane. The catalysed reaction is (4S)-limonene + reduced [NADPH--hemoprotein reductase] + O2 = (1S,6R)-isopiperitenol + oxidized [NADPH--hemoprotein reductase] + H2O + H(+). In terms of biological role, hydroxylates (-)-(4S)-limonene to (-)-trans-isopiperitenol, a precursor of (-)-menthol, responsible for the cooling sensation of peppermint. Fluorinated substrate analogs are hydroxylated with the same regio- and stereochemistry. The protein is Cytochrome P450 71D15 (CYP71D15) of Mentha piperita (Peppermint).